The sequence spans 276 residues: ATP synthase subunit a (276 aa).

Transmembrane regions (helical) follow at residues 47–67, 107–127, 152–172, 188–208, 226–246, and 247–267; these read WHID…WLFY, IAPL…MDLI, DLNV…FYSI, PFNH…TLVA, LIFI…SVPW, and AIFH…LTIV.

This sequence belongs to the ATPase A chain family. In terms of assembly, F-type ATPases have 2 components, CF(1) - the catalytic core - and CF(0) - the membrane proton channel. CF(1) has five subunits: alpha(3), beta(3), gamma(1), delta(1), epsilon(1). CF(0) has three main subunits: a(1), b(2) and c(9-12). The alpha and beta chains form an alternating ring which encloses part of the gamma chain. CF(1) is attached to CF(0) by a central stalk formed by the gamma and epsilon chains, while a peripheral stalk is formed by the delta and b chains.

The protein resides in the cell inner membrane. In terms of biological role, key component of the proton channel; it plays a direct role in the translocation of protons across the membrane. The polypeptide is ATP synthase subunit a (Shewanella pealeana (strain ATCC 700345 / ANG-SQ1)).